Reading from the N-terminus, the 234-residue chain is UDP-2,3-diacylglucosamine hydrolase (234 aa).

Mn(2+)-binding residues include D9, H11, D42, N80, and H115. Position 80 to 81 (80 to 81 (NR)) interacts with substrate. Positions 123, 161, 165, 168, and 196 each coordinate substrate. Residues H196 and H198 each contribute to the Mn(2+) site.

The protein belongs to the LpxH family. The cofactor is Mn(2+).

The protein resides in the cell inner membrane. The enzyme catalyses UDP-2-N,3-O-bis[(3R)-3-hydroxytetradecanoyl]-alpha-D-glucosamine + H2O = 2-N,3-O-bis[(3R)-3-hydroxytetradecanoyl]-alpha-D-glucosaminyl 1-phosphate + UMP + 2 H(+). It functions in the pathway glycolipid biosynthesis; lipid IV(A) biosynthesis; lipid IV(A) from (3R)-3-hydroxytetradecanoyl-[acyl-carrier-protein] and UDP-N-acetyl-alpha-D-glucosamine: step 4/6. In terms of biological role, hydrolyzes the pyrophosphate bond of UDP-2,3-diacylglucosamine to yield 2,3-diacylglucosamine 1-phosphate (lipid X) and UMP by catalyzing the attack of water at the alpha-P atom. Involved in the biosynthesis of lipid A, a phosphorylated glycolipid that anchors the lipopolysaccharide to the outer membrane of the cell. This chain is UDP-2,3-diacylglucosamine hydrolase, found in Haemophilus ducreyi (strain 35000HP / ATCC 700724).